The primary structure comprises 417 residues: Serine hydroxymethyltransferase 1 (417 aa).

(6S)-5,6,7,8-tetrahydrofolate contacts are provided by residues leucine 121 and 125 to 127 (GHL). An N6-(pyridoxal phosphate)lysine modification is found at lysine 229. 355–357 (SPF) lines the (6S)-5,6,7,8-tetrahydrofolate pocket.

Belongs to the SHMT family. Homodimer. Pyridoxal 5'-phosphate is required as a cofactor.

The protein resides in the cytoplasm. The enzyme catalyses (6R)-5,10-methylene-5,6,7,8-tetrahydrofolate + glycine + H2O = (6S)-5,6,7,8-tetrahydrofolate + L-serine. It functions in the pathway one-carbon metabolism; tetrahydrofolate interconversion. It participates in amino-acid biosynthesis; glycine biosynthesis; glycine from L-serine: step 1/1. In terms of biological role, catalyzes the reversible interconversion of serine and glycine with tetrahydrofolate (THF) serving as the one-carbon carrier. This reaction serves as the major source of one-carbon groups required for the biosynthesis of purines, thymidylate, methionine, and other important biomolecules. Also exhibits THF-independent aldolase activity toward beta-hydroxyamino acids, producing glycine and aldehydes, via a retro-aldol mechanism. The chain is Serine hydroxymethyltransferase 1 from Pectobacterium atrosepticum (strain SCRI 1043 / ATCC BAA-672) (Erwinia carotovora subsp. atroseptica).